A 116-amino-acid polypeptide reads, in one-letter code: MCKHVLNAQVSIRTACCRRWIDCIECHNEIADHPLLKTSELTLICKKCRKAFRIQFDQTMDESDEYCPNCDNHFVIDAITKVEKPKAPISPKLDLRMLNQEEKELEELLDETTRLG.

Residues 1–72 (MCKHVLNAQV…SDEYCPNCDN (72 aa)) form a CHY-type zinc finger. 12 residues coordinate Zn(2+): Cys2, His4, Cys16, Cys17, Cys23, Cys26, His27, His33, Cys45, Cys48, Cys67, and Cys70.

The protein resides in the cytoplasm. This is an uncharacterized protein from Schizosaccharomyces pombe (strain 972 / ATCC 24843) (Fission yeast).